A 108-amino-acid polypeptide reads, in one-letter code: Replication initiation control protein YabA (108 aa).

Residues H83, C85, C99, and C102 each contribute to the Zn(2+) site.

It belongs to the YabA family. Homotetramer. Interacts with both DnaA and DnaN, acting as a bridge between these two proteins. The cofactor is Zn(2+).

It is found in the cytoplasm. It localises to the nucleoid. In terms of biological role, involved in control of chromosome replication initiation. Inhibits the cooperative binding of DnaA to the oriC region, thus negatively regulating initiation of chromosome replication. Inhibits the ability of DnaA-ATP to form a helix on DNA; does not disassemble preformed DnaA-DNA helices. Decreases the residence time of DnaA on the chromosome at its binding sites (oriC, replication forks and promoter-binding sites). Tethers DnaA to the replication machinery via the DNA polymerase beta sliding clamp subunit (dnaN). Associates with oriC and other DnaA targets on the chromosome in a DnaA-dependent manner. In Lactococcus lactis subsp. lactis (strain IL1403) (Streptococcus lactis), this protein is Replication initiation control protein YabA.